A 318-amino-acid chain; its full sequence is Methionyl-tRNA formyltransferase (318 aa).

110-113 (SLLP) is a binding site for (6S)-5,6,7,8-tetrahydrofolate.

It belongs to the Fmt family.

It carries out the reaction L-methionyl-tRNA(fMet) + (6R)-10-formyltetrahydrofolate = N-formyl-L-methionyl-tRNA(fMet) + (6S)-5,6,7,8-tetrahydrofolate + H(+). In terms of biological role, attaches a formyl group to the free amino group of methionyl-tRNA(fMet). The formyl group appears to play a dual role in the initiator identity of N-formylmethionyl-tRNA by promoting its recognition by IF2 and preventing the misappropriation of this tRNA by the elongation apparatus. This Lacticaseibacillus paracasei (strain ATCC 334 / BCRC 17002 / CCUG 31169 / CIP 107868 / KCTC 3260 / NRRL B-441) (Lactobacillus paracasei) protein is Methionyl-tRNA formyltransferase.